The primary structure comprises 120 residues: MSDEIIVVSTPYLPGHKITKTLGFTWGLIVRSRGLGRNITAGLRSLAGGEIHEYTQLLNQSRQEALDRLKEHAATMGANAVIGVSFDSSETGGVMTEVLAYGTAVVVEPETGAASPVRLG.

This sequence belongs to the UPF0145 family.

This chain is UPF0145 protein Mboo_1021, found in Methanoregula boonei (strain DSM 21154 / JCM 14090 / 6A8).